A 98-amino-acid chain; its full sequence is Integration host factor subunit beta (98 aa).

The segment at 59–98 (RTGRNPKTGESVTLPGKYVPHFKPGKEMRDRVNESIQSEG) is disordered. The segment covering 82-91 (PGKEMRDRVN) has biased composition (basic and acidic residues).

The protein belongs to the bacterial histone-like protein family. As to quaternary structure, heterodimer of an alpha and a beta chain.

In terms of biological role, this protein is one of the two subunits of integration host factor, a specific DNA-binding protein that functions in genetic recombination as well as in transcriptional and translational control. In Saccharophagus degradans (strain 2-40 / ATCC 43961 / DSM 17024), this protein is Integration host factor subunit beta.